The chain runs to 663 residues: Preterminal protein (663 aa).

Residues 367–376 carry the Nuclear localization signal motif; that stretch reads SLPLPTRRRR. Residues 374 to 414 form a disordered region; the sequence is RRRVARPAPPSPSPSPEPVELEMPPLEGEEEEEEEELPPRS. Residues 380–390 are compositionally biased toward pro residues; the sequence is PAPPSPSPSPE. Residues 400-409 are compositionally biased toward acidic residues; the sequence is EGEEEEEEEE. An O-(5'-phospho-DNA)-serine modification is found at S575. The interval 632–663 is disordered; the sequence is QLQPMPELNDPVQLPPLRPERQRPPLGPRRPL.

This sequence belongs to the adenoviridae terminal protein family. As to quaternary structure, heterodimer with the polymerase; this heterodimer binds to bp 9 to 18 of the genome. Interacts with host POU2F1; POU2F1 binds to the auxiliary sequences in the inverted terminal repeats and tethers the pTP-POL heterodimer to the origin DNA thereby participating in the assembly of the pre-initiation complex (POL-TP-DBP-NFIA-POU2F1). Preterminal protein is used to replicate viral genome, upon genomic encapsidation it is processed first into iTP and finally into TP by adenovirus protease.

The protein resides in the host nucleus matrix. Functionally, protein covalently bound to the viral DNA that acts as a primer for viral genomic replication by DNA strand displacement. Assembles on the viral origin of replication in an initiation complex with viral polymerase, DBP, host NFIA and host POU2F1/OCT1. During initiation, the polymerase covalently couples the first dCTP with Ser-580 of pTP. The terminal protein stimulates the template activity over 20 fold compared to protein-free templates. Neo-synthesized viral genomes are linked to two preterminal proteins, one for each 5' end. These new genomes are encapsidated in the nucleus, and during capsid maturation by viral protease, preterminal protein is first cleaved into intermediary (iTP), then into mature TP. May play a role in host nuclear matrix localization of genomic DNA. This is Preterminal protein from Bos taurus (Bovine).